The sequence spans 281 residues: N-acetylmuramic acid 6-phosphate etherase (281 aa).

The region spanning 63 to 226 is the SIS domain; the sequence is IVPRMKQGGR…TTSVMIQLGR (164 aa). Glu-91 serves as the catalytic Proton donor. Glu-122 is a catalytic residue.

Belongs to the GCKR-like family. MurNAc-6-P etherase subfamily. In terms of assembly, homodimer.

It carries out the reaction N-acetyl-D-muramate 6-phosphate + H2O = N-acetyl-D-glucosamine 6-phosphate + (R)-lactate. It participates in amino-sugar metabolism; N-acetylmuramate degradation. Specifically catalyzes the cleavage of the D-lactyl ether substituent of MurNAc 6-phosphate, producing GlcNAc 6-phosphate and D-lactate. The chain is N-acetylmuramic acid 6-phosphate etherase from Bacteroides fragilis (strain YCH46).